The sequence spans 176 residues: Large ribosomal subunit protein uL10 (176 aa).

Belongs to the universal ribosomal protein uL10 family. Part of the ribosomal stalk of the 50S ribosomal subunit. The N-terminus interacts with L11 and the large rRNA to form the base of the stalk. The C-terminus forms an elongated spine to which L12 dimers bind in a sequential fashion forming a multimeric L10(L12)X complex.

Forms part of the ribosomal stalk, playing a central role in the interaction of the ribosome with GTP-bound translation factors. The sequence is that of Large ribosomal subunit protein uL10 from Saccharophagus degradans (strain 2-40 / ATCC 43961 / DSM 17024).